A 182-amino-acid polypeptide reads, in one-letter code: CDP-diacylglycerol--glycerol-3-phosphate 3-phosphatidyltransferase (182 aa).

The Cytoplasmic portion of the chain corresponds to 1–12; it reads MQLNIPTWLTLF. Residues 13–37 traverse the membrane as a helical segment; sequence RVVLIPFFVLAFYLPFVWAPMVCAI. At 38-60 the chain is on the periplasmic side; that stretch reads IFVFAAATDWFDGFLARRWKQTT. A helical membrane pass occupies residues 61-81; sequence RFGAFLDPVADKVMVAVALVL. Topologically, residues 82–86 are cytoplasmic; it reads VAEHY. The chain crosses the membrane as a helical span at residues 87 to 107; that stretch reads HSWWITLPAATMIAREIIISS. Over 108–145 the chain is Periplasmic; the sequence is LREWMAEIGKRSSVAVSWVGKVKTMAQMGSLVGLLWRP. The chain crosses the membrane as a helical span at residues 146 to 168; sequence DHNVELASFVLLYIAAVLTFWSM. Residues 169-181 lie on the Cytoplasmic side of the membrane; sequence FQYLNAAWSDLLE.

It belongs to the CDP-alcohol phosphatidyltransferase class-I family.

Its subcellular location is the cell inner membrane. It carries out the reaction a CDP-1,2-diacyl-sn-glycerol + sn-glycerol 3-phosphate = a 1,2-diacyl-sn-glycero-3-phospho-(1'-sn-glycero-3'-phosphate) + CMP + H(+). The protein operates within phospholipid metabolism; phosphatidylglycerol biosynthesis; phosphatidylglycerol from CDP-diacylglycerol: step 1/2. In terms of biological role, catalyzes the conversion of cytidine diphosphate diacylglycerol (CDP-DG) and glycerol 3-phosphate into phosphatidylglycerol. Essential for the synthesis of anionic phospholipids, thereby playing a role in balancing the ratio of zwitterionic and anionic phospholipids, which is thought to be important for normal membrane function. In Yersinia pestis bv. Antiqua (strain Antiqua), this protein is CDP-diacylglycerol--glycerol-3-phosphate 3-phosphatidyltransferase.